The sequence spans 660 residues: MSAIESVMQEHRVFNPPEAFASQAAIPSMDAYRALCDEAERDYEGFWARYARELLHWNKPFTKVLDESNAPFYKWFEDGELNASYNCLDRNLQNGNADKVAIVFEADDGTVTRVTYRELHAKVCRLANGLKTLGIRKGDRVVIYMPMSVEGVAAMQACARLGATHSVVFGGFSAKSLQERLVDVGAVALITADEQMRGGKALPLKAIADDALALGGCEAVKNVIVYRRTGGNVGWTEGRDRWLDDVCANQPDTCEAEPVGAEHPLFVLYTSGSTGKPKGVQHSTGGYLLWALMTMKWTFDIKPDDLFWCTADIGWVTGHTYIAYGPLAAGATQVVFEGVPTYPNAGRFWDMIARHKVSIFYTAPTAIRSLIKAAEADEKIHPKQYDLSSLRLLGTVGEPINPEAWMWYYKNVGNENCPIVDTFWQTETGGHMITPLPGATPLVPGSCTLPLPGIMAAIVDETGHDVPNGSGGILVVKRPWPAMIRTIWGDPERFKKSYFPEELGGKLYLAGDGSIRDKDTGYFTIMGRIDDVLNVSGHRMGTMEIESALVANPLVAEAAVVGRPDDMTGEAICAFVVLKRSRPSGEEAAKLATELRNWVGKEIGPIAKPKDIRFGDNLPKTRSGKIMRRLLRSLAKGEEITQDTSTLENPAILEQLKQAQ.

CoA contacts are provided by residues 197-200 and threonine 317; that span reads RGGK. ATP contacts are provided by residues 397-399, 421-426, aspartate 512, and arginine 528; these read GEP and DTFWQT. Position 536 (serine 536) interacts with CoA. Arginine 539 serves as a coordination point for ATP. Mg(2+)-binding residues include valine 550 and valine 555. Lysine 625 carries the N6-acetyllysine modification.

Belongs to the ATP-dependent AMP-binding enzyme family. It depends on Mg(2+) as a cofactor. Acetylated. Deacetylation by the SIR2-homolog deacetylase activates the enzyme.

It catalyses the reaction acetate + ATP + CoA = acetyl-CoA + AMP + diphosphate. Catalyzes the conversion of acetate into acetyl-CoA (AcCoA), an essential intermediate at the junction of anabolic and catabolic pathways. AcsA undergoes a two-step reaction. In the first half reaction, AcsA combines acetate with ATP to form acetyl-adenylate (AcAMP) intermediate. In the second half reaction, it can then transfer the acetyl group from AcAMP to the sulfhydryl group of CoA, forming the product AcCoA. This Cupriavidus taiwanensis (strain DSM 17343 / BCRC 17206 / CCUG 44338 / CIP 107171 / LMG 19424 / R1) (Ralstonia taiwanensis (strain LMG 19424)) protein is Acetyl-coenzyme A synthetase.